Reading from the N-terminus, the 224-residue chain is Ribose-5-phosphate isomerase A (224 aa).

Substrate is bound by residues 32–35 (TGST), 85–88 (DGAD), and 98–101 (KGGG). E107 acts as the Proton acceptor in catalysis. K125 serves as a coordination point for substrate.

It belongs to the ribose 5-phosphate isomerase family. Homodimer.

The enzyme catalyses aldehydo-D-ribose 5-phosphate = D-ribulose 5-phosphate. It functions in the pathway carbohydrate degradation; pentose phosphate pathway; D-ribose 5-phosphate from D-ribulose 5-phosphate (non-oxidative stage): step 1/1. Catalyzes the reversible conversion of ribose-5-phosphate to ribulose 5-phosphate. This Pseudomonas fluorescens (strain Pf0-1) protein is Ribose-5-phosphate isomerase A.